Reading from the N-terminus, the 210-residue chain is ATP-dependent Clp protease proteolytic subunit (210 aa).

Catalysis depends on Ser106, which acts as the Nucleophile. His131 is an active-site residue.

Belongs to the peptidase S14 family. In terms of assembly, fourteen ClpP subunits assemble into 2 heptameric rings which stack back to back to give a disk-like structure with a central cavity, resembling the structure of eukaryotic proteasomes.

The protein localises to the cytoplasm. The enzyme catalyses Hydrolysis of proteins to small peptides in the presence of ATP and magnesium. alpha-casein is the usual test substrate. In the absence of ATP, only oligopeptides shorter than five residues are hydrolyzed (such as succinyl-Leu-Tyr-|-NHMec, and Leu-Tyr-Leu-|-Tyr-Trp, in which cleavage of the -Tyr-|-Leu- and -Tyr-|-Trp bonds also occurs).. Functionally, cleaves peptides in various proteins in a process that requires ATP hydrolysis. Has a chymotrypsin-like activity. Plays a major role in the degradation of misfolded proteins. The chain is ATP-dependent Clp protease proteolytic subunit from Bartonella tribocorum (strain CIP 105476 / IBS 506).